We begin with the raw amino-acid sequence, 509 residues long: Maturase K (509 aa).

This sequence belongs to the intron maturase 2 family. MatK subfamily.

The protein resides in the plastid. It is found in the chloroplast. Its function is as follows. Usually encoded in the trnK tRNA gene intron. Probably assists in splicing its own and other chloroplast group II introns. The polypeptide is Maturase K (Portulaca oleracea (Common purslane)).